Here is a 240-residue protein sequence, read N- to C-terminus: MSGGYDLNLFISPPDCNFLCSVCHGVLKRPVRLPCSHIFCKKCILRWLARQKTCPCCRKEVRHRKMVHVNKLQKIIGRLEVKCRNAEAGCQVTCPLAHRKGHQDSCPFELMVCPNEGCMLRVPRGALDEHRQNCQHGAYHRCSLGCGATLGPVERANHNCYRELREAWCQRQQRSRTLVLCLLQHMRKMHRTTGLIRRQLADFLEEDDPLLVGAPQEEAEATPEGSIGVEVWEPQGQATL.

The RING-type zinc-finger motif lies at 20–58 (CSVCHGVLKRPVRLPCSHIFCKKCILRWLARQKTCPCCR). The TRAF-type zinc-finger motif lies at 101–156 (GHQDSCPFELMVCPNEGCMLRVPRGALDEHRQNCQHGAYHRCSLGCGATLGPVERA).

In Bos taurus (Bovine), this protein is RING finger protein 151 (RNF151).